The chain runs to 205 residues: uncharacterized protein (205 aa).

A coiled-coil region spans residues 10–75 (QDLLSAVDQQ…AANLMTVMTD (66 aa)). The disordered stretch occupies residues 111–138 (PLSNTNNEQTSPPASGKTSETPKKNPTN). Positions 112 to 138 (LSNTNNEQTSPPASGKTSETPKKNPTN) are enriched in polar residues.

The protein belongs to the asfivirus K205R family.

The protein resides in the host cytoplasm. Induces host endoplasmic reticulum stress and consequently activates autophagy and NF-kappa-B signaling pathway. In turn, may induce autophagy-mediated STING1 degradation and innate immune evasion. This is an uncharacterized protein from Ornithodoros (relapsing fever ticks).